We begin with the raw amino-acid sequence, 52 residues long: ATP synthase protein 8 (52 aa).

Residues 6-26 traverse the membrane as a helical segment; the sequence is PLLWLNLFLMFSATFVMFIVL.

It belongs to the ATPase protein 8 family. In terms of assembly, F-type ATPases have 2 components, CF(1) - the catalytic core - and CF(0) - the membrane proton channel.

The protein resides in the mitochondrion membrane. Mitochondrial membrane ATP synthase (F(1)F(0) ATP synthase or Complex V) produces ATP from ADP in the presence of a proton gradient across the membrane which is generated by electron transport complexes of the respiratory chain. F-type ATPases consist of two structural domains, F(1) - containing the extramembraneous catalytic core and F(0) - containing the membrane proton channel, linked together by a central stalk and a peripheral stalk. During catalysis, ATP synthesis in the catalytic domain of F(1) is coupled via a rotary mechanism of the central stalk subunits to proton translocation. Part of the complex F(0) domain. Minor subunit located with subunit a in the membrane. This Penaeus monodon (Giant tiger prawn) protein is ATP synthase protein 8 (MT-ATP8).